We begin with the raw amino-acid sequence, 525 residues long: Cytochrome P450 4V2 (525 aa).

The helical transmembrane segment at 13–33 (LLLWGAASAVSVAGATVLLNI) threads the bilayer. Glutamate 329 and cysteine 467 together coordinate heme.

Belongs to the cytochrome P450 family. The cofactor is heme.

Its subcellular location is the endoplasmic reticulum membrane. The enzyme catalyses dodecanoate + reduced [NADPH--hemoprotein reductase] + O2 = 12-hydroxydodecanoate + oxidized [NADPH--hemoprotein reductase] + H2O + H(+). It carries out the reaction tetradecanoate + reduced [NADPH--hemoprotein reductase] + O2 = 14-hydroxytetradecanoate + oxidized [NADPH--hemoprotein reductase] + H2O + H(+). It catalyses the reaction hexadecanoate + reduced [NADPH--hemoprotein reductase] + O2 = 16-hydroxyhexadecanoate + oxidized [NADPH--hemoprotein reductase] + H2O + H(+). The catalysed reaction is (5Z,8Z,11Z,14Z,17Z)-eicosapentaenoate + reduced [NADPH--hemoprotein reductase] + O2 = 20-hydroxy-(5Z,8Z,11Z,14Z,17Z)-eicosapentaenoate + oxidized [NADPH--hemoprotein reductase] + H2O + H(+). The enzyme catalyses (4Z,7Z,10Z,13Z,16Z,19Z)-docosahexaenoate + reduced [NADPH--hemoprotein reductase] + O2 = 22-hydroxy-(4Z,7Z,10Z,13Z,16Z,19Z)-docosahexaenoate + oxidized [NADPH--hemoprotein reductase] + H2O + H(+). It functions in the pathway lipid metabolism; fatty acid metabolism. Inhibited by N-hydroxy-N'-(4-n-butyl-2-methylphenyl formamidine)(HET0016) with an IC(50) of 38 nM. A cytochrome P450 monooxygenase involved in fatty acid metabolism in the eye. Catalyzes the omega-hydroxylation of polyunsaturated fatty acids (PUFAs) docosahexaenoate (DHA) and its precursor eicosapentaenoate (EPA), and may contribute to the homeostasis of these retinal PUFAs. Omega hydroxylates saturated fatty acids such as laurate, myristate and palmitate, the catalytic efficiency decreasing in the following order: myristate &gt; laurate &gt; palmitate (C14&gt;C12&gt;C16). Mechanistically, uses molecular oxygen inserting one oxygen atom into a substrate, and reducing the second into a water molecule, with two electrons provided by NADPH via cytochrome P450 reductase (CPR; NADPH-ferrihemoprotein reductase). The sequence is that of Cytochrome P450 4V2 (Cyp4v2) from Rattus norvegicus (Rat).